The primary structure comprises 208 residues: Small ribosomal subunit protein uS4 (208 aa).

The S4 RNA-binding domain occupies 98–161; it reads RRLDNVVYRL…RKSKRFKEVF (64 aa).

It belongs to the universal ribosomal protein uS4 family. In terms of assembly, part of the 30S ribosomal subunit. Contacts protein S5. The interaction surface between S4 and S5 is involved in control of translational fidelity.

One of the primary rRNA binding proteins, it binds directly to 16S rRNA where it nucleates assembly of the body of the 30S subunit. In terms of biological role, with S5 and S12 plays an important role in translational accuracy. The polypeptide is Small ribosomal subunit protein uS4 (Halothermothrix orenii (strain H 168 / OCM 544 / DSM 9562)).